Here is a 213-residue protein sequence, read N- to C-terminus: Thymidylate kinase (213 aa).

11 to 18 is a binding site for ATP; sequence GPDGAGKT.

Belongs to the thymidylate kinase family.

The enzyme catalyses dTMP + ATP = dTDP + ADP. Phosphorylation of dTMP to form dTDP in both de novo and salvage pathways of dTTP synthesis. The polypeptide is Thymidylate kinase (Oenococcus oeni (strain ATCC BAA-331 / PSU-1)).